The following is a 1121-amino-acid chain: Linoleate 10R-lipoxygenase (1121 aa).

The segment at 1-66 (MLRRFSSTFK…NEKKGNSVSP (66 aa)) is disordered. Residues 22–36 (TASSSSAAVANTNNN) are compositionally biased toward low complexity. Positions 50–61 (SSSDDDRNEKKG) are enriched in basic and acidic residues. His-253 (proton acceptor) is an active-site residue. Ca(2+) is bound by residues Asp-254, Ser-269, Tyr-271, Asp-273, and Ser-275.

The protein belongs to the peroxidase family.

It carries out the reaction (9Z,12Z)-octadecadienoate + O2 = (8E,10R,12Z)-10-hydroperoxyoctadeca-8,12-dienoate. Its function is as follows. Responsible for the synthesis of various fatty acid-derived oxylipins. Oxidizes linoleic acid primarily to 10R-hydroperoxy-8,12-octadecadienoic acid (10R-HPODE) and, to a lesser extent, 8R-hydroperoxylinoleic acid (8R-HPODE). Also synthesizes 10-hydroxy-octadeca-8,12-dienoic acid (10-HODE) from linoleic acid and primarily 8R-hydroxy-octadeca-9-monoenoic acid (8-HOME, also known as psiB beta) from oleic acid. 8-HOME forms part of psi factor, a mixture of oxylipins that regulates the balance between sexual and asexual spore production. Displays epoxyalcohol synthase activity. Plays a role in the synthesis of prostaglandins which may be required for pathogenicity. This Aspergillus fumigatus (strain ATCC MYA-4609 / CBS 101355 / FGSC A1100 / Af293) (Neosartorya fumigata) protein is Linoleate 10R-lipoxygenase.